A 605-amino-acid polypeptide reads, in one-letter code: Elongation factor 4 (605 aa).

The 183-residue stretch at 11–193 (KNIRNFSIIA…RLVDVIPAPE (183 aa)) folds into the tr-type G domain. GTP contacts are provided by residues 23-28 (DHGKST) and 140-143 (NKID).

It belongs to the TRAFAC class translation factor GTPase superfamily. Classic translation factor GTPase family. LepA subfamily.

The protein localises to the cell inner membrane. The enzyme catalyses GTP + H2O = GDP + phosphate + H(+). Required for accurate and efficient protein synthesis under certain stress conditions. May act as a fidelity factor of the translation reaction, by catalyzing a one-codon backward translocation of tRNAs on improperly translocated ribosomes. Back-translocation proceeds from a post-translocation (POST) complex to a pre-translocation (PRE) complex, thus giving elongation factor G a second chance to translocate the tRNAs correctly. Binds to ribosomes in a GTP-dependent manner. The polypeptide is Elongation factor 4 (Acinetobacter baylyi (strain ATCC 33305 / BD413 / ADP1)).